Here is a 387-residue protein sequence, read N- to C-terminus: MSEYSLFTSESVSEGHPDKIADQVSDAILDAILAEDPEARVACETLVKTGMVLVAGEVRTNAWVDIEEIARGVIREIGYNSSDMGFDWESCAVMNAIGKQSADIAVGVDEAGEHEQGAGDQGLMFGFATNETDVLMPAPITYAHRLVQRQAEVRKNGTLDFLRPDAKSQVTFRYDENGKPCAIDAVVLSTQHSASVKQADLREAVMEEIIKPVLPAEWLSKETKYFINPTGQFIIGGPVGDCGLTGRKIIVDTYGGMARHGGGAFSGKDPSKVDRSAAYAGRYVAKNIVAAGLADKCEIQISYAIGVAEPTSISINTFGTGKVSDAVISQLVREHFELRPAGLIKMLDLKRPIYLPTAAYGHFGREGENFTWEKTDKADALRKAAGL.

H16 is an ATP binding site. D18 serves as a coordination point for Mg(2+). E44 is a binding site for K(+). E57 and Q100 together coordinate L-methionine. The tract at residues 100–110 (QSADIAVGVDE) is flexible loop. Residues 165–167 (DAK), D241, 247–248 (RK), A264, and K268 contribute to the ATP site. D241 serves as a coordination point for L-methionine. K272 lines the L-methionine pocket.

It belongs to the AdoMet synthase family. As to quaternary structure, homotetramer; dimer of dimers. It depends on Mg(2+) as a cofactor. Requires K(+) as cofactor.

The protein resides in the cytoplasm. The catalysed reaction is L-methionine + ATP + H2O = S-adenosyl-L-methionine + phosphate + diphosphate. Its pathway is amino-acid biosynthesis; S-adenosyl-L-methionine biosynthesis; S-adenosyl-L-methionine from L-methionine: step 1/1. In terms of biological role, catalyzes the formation of S-adenosylmethionine (AdoMet) from methionine and ATP. The overall synthetic reaction is composed of two sequential steps, AdoMet formation and the subsequent tripolyphosphate hydrolysis which occurs prior to release of AdoMet from the enzyme. The polypeptide is S-adenosylmethionine synthase (Marinomonas sp. (strain MWYL1)).